Reading from the N-terminus, the 439-residue chain is Putative myrosinase 3 (439 aa).

Residues methionine 1–alanine 19 form the signal peptide. An N-linked (GlcNAc...) asparagine glycan is attached at asparagine 33. A beta-D-glucoside is bound by residues histidine 145, asparagine 190–glutamine 191, and tyrosine 316. The N-linked (GlcNAc...) asparagine glycan is linked to asparagine 336. Positions 386 and 404 each coordinate a beta-D-glucoside. Glutamate 386 (nucleophile) is an active-site residue.

The protein belongs to the glycosyl hydrolase 1 family. In terms of tissue distribution, expressed specifically in stamens and petals.

It catalyses the reaction a thioglucoside + H2O = a sugar + a thiol.. The chain is Putative myrosinase 3 from Arabidopsis thaliana (Mouse-ear cress).